A 406-amino-acid polypeptide reads, in one-letter code: Multifunctional CCA protein (406 aa).

ATP contacts are provided by G8 and R11. CTP-binding residues include G8 and R11. Mg(2+)-binding residues include D21 and D23. Residues R91, R137, and R140 each coordinate ATP. 3 residues coordinate CTP: R91, R137, and R140. The HD domain maps to T228 to W329.

Belongs to the tRNA nucleotidyltransferase/poly(A) polymerase family. Bacterial CCA-adding enzyme type 1 subfamily. In terms of assembly, monomer. Can also form homodimers and oligomers. Mg(2+) is required as a cofactor. The cofactor is Ni(2+).

The enzyme catalyses a tRNA precursor + 2 CTP + ATP = a tRNA with a 3' CCA end + 3 diphosphate. The catalysed reaction is a tRNA with a 3' CCA end + 2 CTP + ATP = a tRNA with a 3' CCACCA end + 3 diphosphate. Its function is as follows. Catalyzes the addition and repair of the essential 3'-terminal CCA sequence in tRNAs without using a nucleic acid template. Adds these three nucleotides in the order of C, C, and A to the tRNA nucleotide-73, using CTP and ATP as substrates and producing inorganic pyrophosphate. tRNA 3'-terminal CCA addition is required both for tRNA processing and repair. Also involved in tRNA surveillance by mediating tandem CCA addition to generate a CCACCA at the 3' terminus of unstable tRNAs. While stable tRNAs receive only 3'-terminal CCA, unstable tRNAs are marked with CCACCA and rapidly degraded. This Vibrio parahaemolyticus serotype O3:K6 (strain RIMD 2210633) protein is Multifunctional CCA protein.